A 189-amino-acid chain; its full sequence is Phosphoheptose isomerase (189 aa).

In terms of domain architecture, SIS spans 34 to 189 (LVEAFRKGNK…CDLVEKALFA (156 aa)). 49 to 51 (NGG) serves as a coordination point for substrate. The Zn(2+) site is built by histidine 58 and glutamate 62. Substrate contacts are provided by residues glutamate 62, 91-92 (ND), 117-119 (STS), serine 122, and glutamine 169. Residues glutamine 169 and histidine 177 each coordinate Zn(2+).

This sequence belongs to the SIS family. GmhA subfamily. In terms of assembly, homotetramer. Requires Zn(2+) as cofactor.

Its subcellular location is the cytoplasm. It catalyses the reaction 2 D-sedoheptulose 7-phosphate = D-glycero-alpha-D-manno-heptose 7-phosphate + D-glycero-beta-D-manno-heptose 7-phosphate. It functions in the pathway carbohydrate biosynthesis; D-glycero-D-manno-heptose 7-phosphate biosynthesis; D-glycero-alpha-D-manno-heptose 7-phosphate and D-glycero-beta-D-manno-heptose 7-phosphate from sedoheptulose 7-phosphate: step 1/1. Its function is as follows. Catalyzes the isomerization of sedoheptulose 7-phosphate in D-glycero-D-manno-heptose 7-phosphate. The sequence is that of Phosphoheptose isomerase from Pelobacter propionicus (strain DSM 2379 / NBRC 103807 / OttBd1).